We begin with the raw amino-acid sequence, 309 residues long: Caspase-7 (309 aa).

A propeptide spans 1–24 (MSGDQHADRSSGEKSNGDQDDTVD) (N-terminally processed). The span at 1-31 (MSGDQHADRSSGEKSNGDQDDTVDAKPDRSS) shows a compositional bias: basic and acidic residues. Residues 1 to 53 (MSGDQHADRSSGEKSNGDQDDTVDAKPDRSSRLSLFAKKKKNGEEEQPKSSLS) form a disordered region. An exosite region spans residues 39-42 (KKKN). Residues 81 to 92 (KNFEDKTGMGTR) are loop L1. Active-site residues include His149 and Cys191. Positions 192 to 201 (RGSEFDEGIQ) are loop L2. A propeptide spanning residues 204–214 (SGPANDTLETD) is cleaved from the precursor. Residues 234 to 246 (VPGYYSWRNPGRG) are loop L3. The loop L4 stretch occupies residues 282 to 296 (ESQSDDPRFSEKKQI).

It belongs to the peptidase C14A family. As to quaternary structure, heterotetramer that consists of two anti-parallel arranged heterodimers, each one formed by a 20 kDa (p20) and a 11 kDa (p11) subunit. Cleavage by different proteases, such as granzyme B (GZMB), caspase-1 (CASP1), caspase-8 (CASP8) or caspase-9 (CASP9) generate the two active subunits. Its involvement in different programmed cell death processes is probably specified by the protease that activates CASP7. Cleaved and activated by initiator caspases (CASP8 and/or CASP9), leading to execution phase of apoptosis. Cleavage and maturation by GZMB regulates granzyme-mediated programmed cell death. Cleaved and activated by CASP1 in response to bacterial infection.

Its subcellular location is the cytoplasm. The protein resides in the cytosol. It localises to the nucleus. It is found in the secreted. The protein localises to the extracellular space. The enzyme catalyses Strict requirement for an Asp residue at position P1 and has a preferred cleavage sequence of Asp-Glu-Val-Asp-|-.. Its activity is regulated as follows. During activation, the N-terminal disordered prodomain is removed by cleavage. Concomitantly, double cleavage gives rise to a large Caspase-7 subunit p20 and a small Caspase-7 subunit p11. The two large and two small subunits then assemble to form the active CASP7 complex. Can be cleaved and activated by different caspases, depending on the context. Cleaved and activated by initiator caspases (CASP8 and/or CASP9), leading to execution phase of apoptosis. Cleavage and maturation by GZMB regulates granzyme-mediated programmed cell death. Cleavage and maturation by CASP1 regulates pyroptosis. Inhibited by BIRC6; following inhibition of BIRC6-caspase binding by DIABLO/SMAC, BIRC6 is subjected to caspase cleavage, leading to an increase in active caspases. In terms of biological role, thiol protease involved in different programmed cell death processes, such as apoptosis, pyroptosis or granzyme-mediated programmed cell death, by proteolytically cleaving target proteins. Has a marked preference for Asp-Glu-Val-Asp (DEVD) consensus sequences, with some plasticity for alternate non-canonical sequences. Its involvement in the different programmed cell death processes is probably determined by upstream proteases that activate CASP7. Acts as an effector caspase involved in the execution phase of apoptosis: following cleavage and activation by initiator caspases (CASP8 and/or CASP9), mediates execution of apoptosis by catalyzing cleavage of proteins. Compared to CASP3, acts as a minor executioner caspase and cleaves a limited set of target proteins. Acts as a key regulator of the inflammatory response in response to bacterial infection by catalyzing cleavage and activation of the sphingomyelin phosphodiesterase SMPD1 in the extracellular milieu, thereby promoting membrane repair. Cleaves BIRC6 following inhibition of BIRC6-caspase binding by DIABLO/SMAC. This is Caspase-7 from Gallus gallus (Chicken).